The chain runs to 380 residues: Carbamoyl phosphate synthase small chain (380 aa).

The tract at residues Met1–Glu184 is CPSase. The L-glutamine site is built by Ser55, Gly236, and Gly238. The region spanning Thr188–Ala380 is the Glutamine amidotransferase type-1 domain. Cys264 (nucleophile) is an active-site residue. The L-glutamine site is built by Phe265, Gln268, Asn306, Gly308, and Phe309. Active-site residues include His354 and Glu356.

It belongs to the CarA family. As to quaternary structure, composed of two chains; the small (or glutamine) chain promotes the hydrolysis of glutamine to ammonia, which is used by the large (or ammonia) chain to synthesize carbamoyl phosphate. Tetramer of heterodimers (alpha,beta)4.

It carries out the reaction hydrogencarbonate + L-glutamine + 2 ATP + H2O = carbamoyl phosphate + L-glutamate + 2 ADP + phosphate + 2 H(+). The catalysed reaction is L-glutamine + H2O = L-glutamate + NH4(+). It functions in the pathway amino-acid biosynthesis; L-arginine biosynthesis; carbamoyl phosphate from bicarbonate: step 1/1. The protein operates within pyrimidine metabolism; UMP biosynthesis via de novo pathway; (S)-dihydroorotate from bicarbonate: step 1/3. Its function is as follows. Small subunit of the glutamine-dependent carbamoyl phosphate synthetase (CPSase). CPSase catalyzes the formation of carbamoyl phosphate from the ammonia moiety of glutamine, carbonate, and phosphate donated by ATP, constituting the first step of 2 biosynthetic pathways, one leading to arginine and/or urea and the other to pyrimidine nucleotides. The small subunit (glutamine amidotransferase) binds and cleaves glutamine to supply the large subunit with the substrate ammonia. The polypeptide is Carbamoyl phosphate synthase small chain (Streptomyces coelicolor (strain ATCC BAA-471 / A3(2) / M145)).